The following is a 675-amino-acid chain: Probable metal-nicotianamine transporter YSL16 (675 aa).

The segment covering 1–11 (MDRHALGGGGA) has biased composition (gly residues). The segment at 1-20 (MDRHALGGGGALEIEKTPEA) is disordered. A run of 14 helical transmembrane segments spans residues 50–70 (GMVA…KLSL), 73–93 (GLIP…LRGW), 118–138 (CAVA…LLGL), 162–182 (GIGW…LTLL), 231–251 (ISFL…CGFL), 283–303 (LVNL…WPLI), 329–349 (FICI…VIVV), 393–413 (MAYT…PVMF), 421–441 (VIIA…GTGL), 453–473 (IALF…AGLV), 507–527 (VGQV…FFLF), 567–587 (LQLC…RDFL), 605–625 (FLVG…VFLW), and 633–653 (AALL…IWTF).

It belongs to the YSL (TC 2.A.67.2) family. In terms of tissue distribution, expressed in roots.

The protein localises to the membrane. May be involved in the transport of nicotianamine-chelated metals. The protein is Probable metal-nicotianamine transporter YSL16 (YSL16) of Oryza sativa subsp. japonica (Rice).